Consider the following 450-residue polypeptide: Phosphoglucosamine mutase (450 aa).

Catalysis depends on Ser101, which acts as the Phosphoserine intermediate. Ser101, Asp242, Asp244, and Asp246 together coordinate Mg(2+). At Ser101 the chain carries Phosphoserine.

It belongs to the phosphohexose mutase family. It depends on Mg(2+) as a cofactor. In terms of processing, activated by phosphorylation.

The catalysed reaction is alpha-D-glucosamine 1-phosphate = D-glucosamine 6-phosphate. Catalyzes the conversion of glucosamine-6-phosphate to glucosamine-1-phosphate. This chain is Phosphoglucosamine mutase, found in Rhodopseudomonas palustris (strain ATCC BAA-98 / CGA009).